The primary structure comprises 802 residues: Peptidyl serine alpha-galactosyltransferase (802 aa).

An N-terminal signal peptide occupies residues 1-19; the sequence is MRWDLITAIVAALVVSVLA. Residues 20–750 are Extracellular-facing; sequence DESGQMAPYR…SEGRFSTLKL (731 aa). N-linked (GlcNAc...) asparagine glycosylation is found at Asn-214, Asn-275, Asn-425, and Asn-637. A disordered region spans residues 699–741; it reads RNCPEPGSESTEKISVSRKVGNIETKQTQGSDETKESSGSSES. The chain crosses the membrane as a helical span at residues 751-771; sequence WVIALWLISGVGFLVVMLLVF. Residues 772 to 802 are Cytoplasmic-facing; that stretch reads STRRGRGTTRGKGYRNKRRTSYSNTGFLDTK. Positions 777-791 are enriched in basic residues; sequence RGTTRGKGYRNKRRT. A disordered region spans residues 777 to 802; that stretch reads RGTTRGKGYRNKRRTSYSNTGFLDTK. The span at 792–802 shows a compositional bias: polar residues; that stretch reads SYSNTGFLDTK.

It localises to the endoplasmic reticulum membrane. Functionally, glycosyltransferase involved in the O-galactosylation of several proteins including extensins. Catalyzes the transfer of alpha-galactosyl to Ser residues. Hydroxylation of proline residues adjacent to the serine acceptor is required for activity. In Arabidopsis thaliana (Mouse-ear cress), this protein is Peptidyl serine alpha-galactosyltransferase.